A 396-amino-acid chain; its full sequence is S-adenosylmethionine synthase 4 (396 aa).

Glu12 is a binding site for Mg(2+). An ATP-binding site is contributed by His18. Glu46 contributes to the K(+) binding site. Residues Glu59 and Gln102 each contribute to the L-methionine site. ATP contacts are provided by residues 170–172 (DGK), 238–241 (SGRF), Asp249, 255–256 (RK), Ala272, Lys276, and Lys280. An L-methionine-binding site is contributed by Asp249. Lys280 provides a ligand contact to L-methionine.

Belongs to the AdoMet synthase family. Homotetramer. Mn(2+) is required as a cofactor. Mg(2+) serves as cofactor. The cofactor is Co(2+). It depends on K(+) as a cofactor.

It localises to the cytoplasm. The enzyme catalyses L-methionine + ATP + H2O = S-adenosyl-L-methionine + phosphate + diphosphate. It participates in amino-acid biosynthesis; S-adenosyl-L-methionine biosynthesis; S-adenosyl-L-methionine from L-methionine: step 1/1. In terms of biological role, catalyzes the formation of S-adenosylmethionine from methionine and ATP. The reaction comprises two steps that are both catalyzed by the same enzyme: formation of S-adenosylmethionine (AdoMet) and triphosphate, and subsequent hydrolysis of the triphosphate. The sequence is that of S-adenosylmethionine synthase 4 (SAM4) from Hordeum vulgare (Barley).